A 205-amino-acid polypeptide reads, in one-letter code: MIPVCQKFEQTFIKDILSLLVLYMKTKMINLVKKEEEDKLNQITESIHDKLTVSSNDNKVDPNLSSIVFTGLYYILKVALKKKVSNQIFVADITDLKLPQNLITDLTNIYNTQSKDLAERSNNDKILFPQLSSFKWRVDVIISSSFTSRVLNPVILMEMNDTNGKSKVFEVSIDNFHKLRYNAAKLLKDLEDLEQIQILSKLENK.

Positions 130–194 (QLSSFKWRVD…KLLKDLEDLE (65 aa)) constitute a COMM domain.

This sequence belongs to the COMM domain-containing protein 5 family. In terms of assembly, component of the commander complex consisting of the CCC subcomplex and the retriever subcomplex. Component of the CCC subcomplex.

In terms of biological role, scaffold protein in the commander complex that is essential for endosomal recycling of transmembrane cargos; the commander complex is composed of the CCC subcomplex and the retriever subcomplex. The chain is COMM domain-containing protein 5 (commd5) from Dictyostelium discoideum (Social amoeba).